The following is a 173-amino-acid chain: RNA pyrophosphohydrolase (173 aa).

The 144-residue stretch at 6–149 (GFRANVGIII…KRDVYRKVMK (144 aa)) folds into the Nudix hydrolase domain. Residues 38 to 59 (GGVDDGESAEEAMYRELYEEVG) carry the Nudix box motif.

This sequence belongs to the Nudix hydrolase family. RppH subfamily. The cofactor is a divalent metal cation.

In terms of biological role, accelerates the degradation of transcripts by removing pyrophosphate from the 5'-end of triphosphorylated RNA, leading to a more labile monophosphorylated state that can stimulate subsequent ribonuclease cleavage. This Shewanella pealeana (strain ATCC 700345 / ANG-SQ1) protein is RNA pyrophosphohydrolase.